Consider the following 619-residue polypeptide: Bifunctional glutathionylspermidine synthetase/amidase (619 aa).

Residues 2 to 195 (SKGTTSQDAP…LGWMIQTEDT (194 aa)) are gsp amidase. Residues 34–176 (DPQEYEDDAV…MVVENGCYTL (143 aa)) form the Peptidase C51 domain. Q58 is a glutathionylspermidine binding site. C59 acts as the S-(gamma-glutamyl-cysteinyl-glycyl)-cysteine intermediate in catalysis. A Cysteine sulfenic acid (-SOH); transient modification is found at C59. Residues R64, 78-81 (VGMA), and N149 contribute to the glutathionylspermidine site. The linker stretch occupies residues 196 to 205 (EYSLPQPEIA). The tract at residues 206-619 (GELLKISGAR…DIEPLIVVKK (414 aa)) is gsp synthetase. Position 316 (R316) interacts with glutathione. 316 to 318 (RMD) provides a ligand contact to ATP. Mg(2+) contacts are provided by D318, E330, and N332. S335 is a binding site for glutathione. Residue E391 coordinates spermidine. 2 residues coordinate glutathione: E392 and T446. Residues K498, K533, 539–540 (CG), 568–571 (QQLW), Q582, and 603–605 (LVI) contribute to the ATP site. Position 610 (D610) interacts with spermidine.

In the C-terminal section; belongs to the glutathionylspermidine synthase preATP-grasp family. In terms of assembly, homodimer. Oxidation of Cys-59 to sulfenic acid during oxidative stress selectively inhibits the amidase activity which leads to a rapid increase in the amounts of intracellular Gsp and Gsp S-thiolated proteins (GspSSPs).

It carries out the reaction spermidine + glutathione + ATP = glutathionylspermidine + ADP + phosphate + H(+). The catalysed reaction is glutathionylspermidine + H2O = spermidine + glutathione. It participates in sulfur metabolism; glutathione metabolism. The protein operates within amine and polyamine metabolism; spermidine metabolism. When exposed to oxidative stress, Gsp amidase activity is transiently inhibited in vivo by oxidation of the catalytic Cys-59 thiol to sulfenic acid; this modification does not affect Gsp synthetase activity. Gsp amidase activity is negatively autoregulated by the Gsp synthetase domain, and is activated by the Gsp synthetase substrates, GSH and ATP-Mg(2+); the occupancy of the synthetase active site may initiate communication through the protein as manifest by the release of inhibition of the amidase activity. A tetrahedral phosphonate analog of glutathionylspermidine, designed as a mimic of the proposed tetrahedral intermediate for either reaction, inhibits the synthetase activity (Ki of 10 uM) but does not inhibit the amidase activity. Amidase activity is inhibited by iodoacetamide in vitro. Its function is as follows. Catalyzes the formation of an amide bond between glutathione (GSH) and spermidine coupled with hydrolysis of ATP; also catalyzes the opposing reaction, i.e. the hydrolysis of glutathionylspermidine (Gsp) back to glutathione and spermidine. The amidase active site can also hydrolyze Gsp-disulfide (Gsp-S-S-Gsp) to Gsp-SG and Gsp S-thiolated proteins (GspSSPs) to GSH S-thiolated protein (GSSPs). Likely acts synergistically with glutaredoxin to regulate the redox environment of E.coli and defend against oxidative damage. In vitro, the amidase active site also catalyzes hydrolysis of amide and ester derivatives of glutathione (e.g. glutathione ethyl ester and glutathione amide) but lacks activity toward acetylspermidine (N1 and N8) and acetylspermine (N1). This Escherichia coli (strain K12) protein is Bifunctional glutathionylspermidine synthetase/amidase (gss).